The primary structure comprises 286 residues: UDP-3-O-acyl-N-acetylglucosamine deacetylase (286 aa).

3 residues coordinate Zn(2+): His79, His237, and Asp241. His264 acts as the Proton donor in catalysis.

This sequence belongs to the LpxC family. It depends on Zn(2+) as a cofactor.

It catalyses the reaction a UDP-3-O-[(3R)-3-hydroxyacyl]-N-acetyl-alpha-D-glucosamine + H2O = a UDP-3-O-[(3R)-3-hydroxyacyl]-alpha-D-glucosamine + acetate. Its pathway is glycolipid biosynthesis; lipid IV(A) biosynthesis; lipid IV(A) from (3R)-3-hydroxytetradecanoyl-[acyl-carrier-protein] and UDP-N-acetyl-alpha-D-glucosamine: step 2/6. Catalyzes the hydrolysis of UDP-3-O-myristoyl-N-acetylglucosamine to form UDP-3-O-myristoylglucosamine and acetate, the committed step in lipid A biosynthesis. The chain is UDP-3-O-acyl-N-acetylglucosamine deacetylase from Chlamydia trachomatis serovar L2 (strain ATCC VR-902B / DSM 19102 / 434/Bu).